Reading from the N-terminus, the 137-residue chain is Nucleoside diphosphate kinase (137 aa).

Residues Lys9, Phe57, Arg85, Thr91, Arg102, and Asn112 each coordinate ATP. The active-site Pros-phosphohistidine intermediate is the His115.

The protein belongs to the NDK family. In terms of assembly, homotetramer. It depends on Mg(2+) as a cofactor.

The protein resides in the cytoplasm. It carries out the reaction a 2'-deoxyribonucleoside 5'-diphosphate + ATP = a 2'-deoxyribonucleoside 5'-triphosphate + ADP. The catalysed reaction is a ribonucleoside 5'-diphosphate + ATP = a ribonucleoside 5'-triphosphate + ADP. In terms of biological role, major role in the synthesis of nucleoside triphosphates other than ATP. The ATP gamma phosphate is transferred to the NDP beta phosphate via a ping-pong mechanism, using a phosphorylated active-site intermediate. The polypeptide is Nucleoside diphosphate kinase (Aliarcobacter butzleri (strain RM4018) (Arcobacter butzleri)).